Here is a 246-residue protein sequence, read N- to C-terminus: Probable transcriptional regulatory protein WRi_002620 (246 aa).

The disordered stretch occupies residues M1–S22.

Belongs to the TACO1 family.

It is found in the cytoplasm. In Wolbachia sp. subsp. Drosophila simulans (strain wRi), this protein is Probable transcriptional regulatory protein WRi_002620.